The primary structure comprises 157 residues: Protein Smg homolog (157 aa).

The protein belongs to the Smg family.

The chain is Protein Smg homolog from Shewanella woodyi (strain ATCC 51908 / MS32).